The primary structure comprises 457 residues: Adenylosuccinate synthetase (457 aa).

Residues 40–46 and 70–72 each bind GTP; these read GDEGKGK and GHT. The Proton acceptor role is filled by aspartate 41. The Mg(2+) site is built by aspartate 41 and glycine 70. Residues 41–44, 68–71, threonine 161, arginine 175, asparagine 255, threonine 270, and arginine 334 each bind IMP; these read DEGK and NAGH. The active-site Proton donor is the histidine 71. 330–336 provides a ligand contact to substrate; it reads VTTGRKR. Residues arginine 336, 362 to 364, and 444 to 446 contribute to the GTP site; these read KLD and GVG.

The protein belongs to the adenylosuccinate synthetase family. Homodimer. Mg(2+) serves as cofactor.

Its subcellular location is the cytoplasm. It catalyses the reaction IMP + L-aspartate + GTP = N(6)-(1,2-dicarboxyethyl)-AMP + GDP + phosphate + 2 H(+). It participates in purine metabolism; AMP biosynthesis via de novo pathway; AMP from IMP: step 1/2. Plays an important role in the de novo pathway and in the salvage pathway of purine nucleotide biosynthesis. Catalyzes the first committed step in the biosynthesis of AMP from IMP. This is Adenylosuccinate synthetase from Caenorhabditis elegans.